The following is a 169-amino-acid chain: Unfolded protein response-inducible protein 1 (169 aa).

Involved in the unfolded protein response (UPR), a transcriptional response which up-regulates genes that enable cells to cope with misfolded, endoplasmic reticulum-retained proteins. UPR is part of the endoplasmic reticulum quality control (ERQC) which prevents the exit of misfolded secretory and membrane proteins from the endoplasmic reticulum. This is Unfolded protein response-inducible protein 1 (ULI1) from Saccharomyces cerevisiae (strain ATCC 204508 / S288c) (Baker's yeast).